The following is a 65-amino-acid chain: Photosystem II reaction center protein J (65 aa).

Residues 35–55 (LWLVATAGGTAVIFVLGIFFY) traverse the membrane as a helical segment.

Belongs to the PsbJ family. In terms of assembly, PSII is composed of 1 copy each of membrane proteins PsbA, PsbB, PsbC, PsbD, PsbE, PsbF, PsbH, PsbI, PsbJ, PsbK, PsbL, PsbM, PsbT, PsbX, PsbY, Psb30/Ycf12, peripheral proteins PsbO, CyanoQ (PsbQ), PsbU, PsbV and a large number of cofactors. It forms dimeric complexes.

The protein resides in the cellular thylakoid membrane. Functionally, one of the components of the core complex of photosystem II (PSII). PSII is a light-driven water:plastoquinone oxidoreductase that uses light energy to abstract electrons from H(2)O, generating O(2) and a proton gradient subsequently used for ATP formation. It consists of a core antenna complex that captures photons, and an electron transfer chain that converts photonic excitation into a charge separation. This chain is Photosystem II reaction center protein J, found in Prochlorococcus marinus (strain NATL1A).